The primary structure comprises 437 residues: Eukaryotic peptide chain release factor subunit 1 (437 aa).

N-acetylalanine is present on A2. The NIKS motif; plays an important role in translational termination motif lies at N61–S64. K63 carries the 4-hydroxylysine modification. A Glycyl lysine isopeptide (Lys-Gly) (interchain with G-Cter in SUMO2) cross-link involves residue K87. Residue Q185 is modified to N5-methylglutamine. The residue at position 347 (T347) is a Phosphothreonine. K404 is covalently cross-linked (Glycyl lysine isopeptide (Lys-Gly) (interchain with G-Cter in SUMO2)).

This sequence belongs to the eukaryotic release factor 1 family. As to quaternary structure, component of the eRF1-eRF3-GTP ternary complex, composed of ETF1/ERF1 and eRF3 (GSPT1/ERF3A or GSPT2/ERF3B) and GTP. Component of the transient SURF (SMG1-UPF1-eRF1-eRF3) complex. Interacts with JMJD4. The ETF1-GSPT1 complex interacts with JMJD4. Hydroxylation at Lys-63 by JMJD4 promotes its translational termination efficiency. Post-translationally, methylated at Gln-185 by N6AMT1. In terms of processing, ubiquitinated via 'Lys-6'-linked polyubiquitin chains by RNF14 and RNF25 in response to ribosome collisions (ribosome stalling), leading to its degradation by the proteasome and rescue of stalled ribosomes.

The protein resides in the cytoplasm. Functionally, component of the eRF1-eRF3-GTP ternary complex, a ternary complex that mediates translation termination in response to the termination codons. The eRF1-eRF3-GTP complex binds to a stop codon in the ribosomal A-site. ETF1/ERF1 is responsible for stop codon recognition and inducing hydrolysis of peptidyl-tRNA. Following GTP hydrolysis, eRF3 (GSPT1/ERF3A or GSPT2/ERF3B) dissociates, permitting ETF1/eRF1 to accommodate fully in the A-site, followed by hydrolysis of peptidyl-tRNA. Component of the transient SURF complex which recruits UPF1 to stalled ribosomes in the context of nonsense-mediated decay (NMD) of mRNAs containing premature stop codons. Required for SHFL-mediated translation termination which inhibits programmed ribosomal frameshifting (-1PRF) of mRNA from viruses and cellular genes. This chain is Eukaryotic peptide chain release factor subunit 1 (ETF1), found in Pongo abelii (Sumatran orangutan).